The sequence spans 54 residues: Potassium channel toxin alpha-KTx 14.2 (54 aa).

The signal sequence occupies residues 1-23 (MKIFFAILLILAVCSMAIWTVNG). Intrachain disulfides connect Cys30–Cys46, Cys36–Cys51, and Cys40–Cys53.

The protein belongs to the short scorpion toxin superfamily. Potassium channel inhibitor family. Alpha-KTx 14 subfamily. As to expression, expressed by the venom gland.

It localises to the secreted. Inhibits potassium channels. May be active towards small conductance calcium-activated potassium channels (KCNN, SK), and less active towards voltage-gated potassium channels (Kv/KCN). In Olivierus martensii (Manchurian scorpion), this protein is Potassium channel toxin alpha-KTx 14.2.